The following is an 802-amino-acid chain: Leucine--tRNA ligase (802 aa).

The 'HIGH' region signature appears at proline 40–histidine 51. The 'KMSKS' region signature appears at lysine 576–serine 580. Lysine 579 lines the ATP pocket.

The protein belongs to the class-I aminoacyl-tRNA synthetase family.

The protein resides in the cytoplasm. It catalyses the reaction tRNA(Leu) + L-leucine + ATP = L-leucyl-tRNA(Leu) + AMP + diphosphate. The chain is Leucine--tRNA ligase from Bacillus thuringiensis subsp. konkukian (strain 97-27).